Consider the following 111-residue polypeptide: Small ribosomal subunit protein bS16 (111 aa).

Residues 92-111 are disordered; sequence MDVKAKNRKARSSKQEAKEA.

The protein belongs to the bacterial ribosomal protein bS16 family.

This Rickettsia akari (strain Hartford) protein is Small ribosomal subunit protein bS16.